Reading from the N-terminus, the 194-residue chain is Inner membrane-spanning protein YciB (194 aa).

Helical transmembrane passes span 1–21 (MKLL…KTTN), 49–69 (EKMH…TILF), 77–97 (WKPS…GWVS), 120–140 (LNYS…YVAY), and 150–170 (FKLF…GVYI).

The protein belongs to the YciB family.

Its subcellular location is the cell inner membrane. Plays a role in cell envelope biogenesis, maintenance of cell envelope integrity and membrane homeostasis. In Hahella chejuensis (strain KCTC 2396), this protein is Inner membrane-spanning protein YciB.